Here is a 287-residue protein sequence, read N- to C-terminus: 3-hydroxyanthranilate 3,4-dioxygenase (287 aa).

The segment at M1–D163 is domain A (catalytic). O2 is bound at residue R46. H50, E56, and H94 together coordinate Fe cation. E56 lines the substrate pocket. Residues R98 and E108 each coordinate substrate. A linker region spans residues P164–V180. The segment at M181–Y287 is domain B.

It belongs to the 3-HAO family. As to quaternary structure, monomer. The cofactor is Fe(2+).

The protein localises to the cytoplasm. It localises to the cytosol. It catalyses the reaction 3-hydroxyanthranilate + O2 = (2Z,4Z)-2-amino-3-carboxymuconate 6-semialdehyde. The protein operates within cofactor biosynthesis; NAD(+) biosynthesis; quinolinate from L-kynurenine: step 3/3. Its function is as follows. Catalyzes the oxidative ring opening of 3-hydroxyanthranilate to 2-amino-3-carboxymuconate semialdehyde, which spontaneously cyclizes to quinolinate. The sequence is that of 3-hydroxyanthranilate 3,4-dioxygenase (haao) from Danio rerio (Zebrafish).